A 404-amino-acid polypeptide reads, in one-letter code: Phosphoglycerate kinase (404 aa).

Substrate-binding positions include 26 to 28 (DFN), R41, 64 to 67 (HLGR), R124, and R161. ATP is bound by residues K212, G301, E332, and 359–362 (GGDS).

Belongs to the phosphoglycerate kinase family. As to quaternary structure, monomer.

It localises to the cytoplasm. The catalysed reaction is (2R)-3-phosphoglycerate + ATP = (2R)-3-phospho-glyceroyl phosphate + ADP. It functions in the pathway carbohydrate degradation; glycolysis; pyruvate from D-glyceraldehyde 3-phosphate: step 2/5. This Mesomycoplasma hyopneumoniae (strain 232) (Mycoplasma hyopneumoniae) protein is Phosphoglycerate kinase.